Here is a 108-residue protein sequence, read N- to C-terminus: uncharacterized protein (108 aa).

An N-terminal signal peptide occupies residues 1–21; the sequence is MFRSLFLAAALMAFTPLAANA.

The protein to E.coli YaaX.

This is an uncharacterized protein from Escherichia coli O157:H7.